Here is a 499-residue protein sequence, read N- to C-terminus: Topoisomerase I damage affected protein 11 (499 aa).

The segment at 32–62 is disordered; sequence RKTGRKIRSASSNGYRLEHHRTSSAGSMHSQ. The stretch at 179–231 forms a coiled coil; it reads ALLQSLATKELELLECKQKIEDLKKQTQHEEQNYTRRARELHELKEQVSKHLD. Phosphothreonine is present on T236. 2 positions are modified to phosphoserine: S244 and S286. Disordered stretches follow at residues 252 to 306, 332 to 377, and 400 to 499; these read LESR…SKQS, WDDS…SVSR, and DVIT…QKLS. The segment covering 257 to 287 has biased composition (polar residues); that stretch reads ENAGNSSLPSSVSKPKNMGHQSTNQSRSVSP. A compositionally biased stretch (basic and acidic residues) spans 290–301; that stretch reads IQERRQRDDSSD. 2 stretches are compositionally biased toward polar residues: residues 332-359 and 368-377; these read WDDS…QQYD and KSPSQGSVSR. Basic and acidic residues predominate over residues 403-421; it reads TDNRCDPVYKSDRQHEQKK. The span at 470 to 479 shows a compositional bias: basic residues; that stretch reads TREKKSKRSS.

It belongs to the TDA11 family.

Its subcellular location is the cytoplasm. The protein is Topoisomerase I damage affected protein 11 (TDA11) of Saccharomyces cerevisiae (strain Zymaflore VL3) (Baker's yeast).